A 283-amino-acid polypeptide reads, in one-letter code: Putative pyruvate, phosphate dikinase regulatory protein (283 aa).

G156–T163 serves as a coordination point for ADP.

This sequence belongs to the pyruvate, phosphate/water dikinase regulatory protein family. PDRP subfamily.

It carries out the reaction N(tele)-phospho-L-histidyl/L-threonyl-[pyruvate, phosphate dikinase] + ADP = N(tele)-phospho-L-histidyl/O-phospho-L-threonyl-[pyruvate, phosphate dikinase] + AMP + H(+). The catalysed reaction is N(tele)-phospho-L-histidyl/O-phospho-L-threonyl-[pyruvate, phosphate dikinase] + phosphate + H(+) = N(tele)-phospho-L-histidyl/L-threonyl-[pyruvate, phosphate dikinase] + diphosphate. Bifunctional serine/threonine kinase and phosphorylase involved in the regulation of the pyruvate, phosphate dikinase (PPDK) by catalyzing its phosphorylation/dephosphorylation. This is Putative pyruvate, phosphate dikinase regulatory protein from Desulfotalea psychrophila (strain LSv54 / DSM 12343).